We begin with the raw amino-acid sequence, 503 residues long: Proton-coupled zinc antiporter SLC30A1 (503 aa).

At 1–10 (MGCWGRNRGR) the chain is on the cytoplasmic side. The helical transmembrane segment at 11 to 31 (LLCMLLLTFMFMVLEVVVSRV) threads the bilayer. Over 32–35 (TASL) the chain is Extracellular. Residues 36–56 (AMLSDSFHMLSDVLALVVALV) traverse the membrane as a helical segment. Zn(2+)-binding residues include His-43 and Asp-47. Residues 57-78 (AERFARRTHATQKNTFGWIRAE) are Cytoplasmic-facing. Residues 79 to 99 (VMGALVNAIFLTGLCFAILLE) form a helical membrane-spanning segment. At 100-113 (AVERFIEPHEMQQP) the chain is on the extracellular side. A helical membrane pass occupies residues 114–134 (LVVLSVGVAGLLVNVLGLCLF). Residues 135–243 (HHHSGEGQGA…RAGQLNMRGV (109 aa)) lie on the Cytoplasmic side of the membrane. A disordered region spans residues 140–213 (EGQGAGHGHS…PEKLRSDDPV (74 aa)). The segment at 145–156 (GHGHSHGHGHGH) is 6 X 2 AA approximate repeats of H-G. The segment covering 147–165 (GHSHGHGHGHLAKGARKAG) has biased composition (basic residues). Positions 184-196 (TNTLVANTSNSNG) are enriched in polar residues. The segment covering 200–211 (DQAEPEKLRSDD) has biased composition (basic and acidic residues). A helical transmembrane segment spans residues 244–264 (FLHVLGDALGSVIVVVNALVF). Zn(2+)-binding residues include His-246 and Asp-250. Residues 265-303 (YFNWKGCTEDDFCTNPCFPDPCKSSVEIINSTQAPMRDA) lie on the Extracellular side of the membrane. Residue Asn-294 is glycosylated (N-linked (GlcNAc...) asparagine). Residues 304–324 (GPCWVLYLDPTLCIIMVCILL) form a helical membrane-spanning segment. Residues 325 to 503 (YTTYPLLKES…VPNKQPESSL (179 aa)) are Cytoplasmic-facing. Residue Ser-502 is modified to Phosphoserine.

Belongs to the cation diffusion facilitator (CDF) transporter (TC 2.A.4) family. SLC30A subfamily. In terms of assembly, homodimer. Interacts with TMEM163. Interacts and forms a complex with TMC6 and TMC8; the interaction regulates zinc transport into the ER. As to expression, widely expressed.

Its subcellular location is the cell membrane. The protein localises to the basolateral cell membrane. It is found in the cytoplasmic vesicle membrane. The protein resides in the cytoplasm. It localises to the endoplasmic reticulum membrane. Its subcellular location is the golgi apparatus membrane. The protein localises to the nucleus membrane. The enzyme catalyses Zn(2+)(in) + 2 H(+)(out) = Zn(2+)(out) + 2 H(+)(in). Its function is as follows. Zinc ion:proton antiporter that could function at the plasma membrane mediating zinc efflux from cells against its electrochemical gradient protecting them from intracellular zinc accumulation and toxicity. Alternatively, could prevent the transport to the plasma membrane of CACNB2, the L-type calcium channels regulatory subunit, through a yet to be defined mechanism. By modulating the expression of these channels at the plasma membrane, could prevent calcium and zinc influx into cells. By the same mechanism, could also prevent L-type calcium channels-mediated heavy metal influx into cells. In some cells, could also function as a zinc ion:proton antiporter mediating zinc entry into the lumen of cytoplasmic vesicles. In macrophages, can increase zinc ions concentration into the lumen of cytoplasmic vesicles containing engulfed bacteria and could help inactivate them. Forms a complex with TMC6/EVER1 and TMC8/EVER2 at the ER membrane of keratynocytes which facilitates zinc uptake into the ER. Down-regulates the activity of transcription factors induced by zinc and cytokines. The chain is Proton-coupled zinc antiporter SLC30A1 from Mus musculus (Mouse).